The sequence spans 196 residues: Holliday junction branch migration complex subunit RuvA (196 aa).

The interval 1-63 (MIEYIKGEIV…EDAHLLFGFA (63 aa)) is domain I. The domain II stretch occupies residues 64 to 142 (EKIERELFLL…PMESMAGNLP (79 aa)). A flexible linker region spans residues 142-146 (PEASV). The segment at 147–196 (SNGAVTEEAVAALVMLGFQKAASQKAVSAILKGSPTLAVEQVIKTALRML) is domain III.

The protein belongs to the RuvA family. In terms of assembly, homotetramer. Forms an RuvA(8)-RuvB(12)-Holliday junction (HJ) complex. HJ DNA is sandwiched between 2 RuvA tetramers; dsDNA enters through RuvA and exits via RuvB. An RuvB hexamer assembles on each DNA strand where it exits the tetramer. Each RuvB hexamer is contacted by two RuvA subunits (via domain III) on 2 adjacent RuvB subunits; this complex drives branch migration. In the full resolvosome a probable DNA-RuvA(4)-RuvB(12)-RuvC(2) complex forms which resolves the HJ.

The protein localises to the cytoplasm. The RuvA-RuvB-RuvC complex processes Holliday junction (HJ) DNA during genetic recombination and DNA repair, while the RuvA-RuvB complex plays an important role in the rescue of blocked DNA replication forks via replication fork reversal (RFR). RuvA specifically binds to HJ cruciform DNA, conferring on it an open structure. The RuvB hexamer acts as an ATP-dependent pump, pulling dsDNA into and through the RuvAB complex. HJ branch migration allows RuvC to scan DNA until it finds its consensus sequence, where it cleaves and resolves the cruciform DNA. This is Holliday junction branch migration complex subunit RuvA from Parabacteroides distasonis (strain ATCC 8503 / DSM 20701 / CIP 104284 / JCM 5825 / NCTC 11152).